The sequence spans 345 residues: Cytoskeleton protein RodZ (345 aa).

Over 1 to 111 the chain is Cytoplasmic; the sequence is MNTEASQDQT…LGKKHKKRDG (111 aa). The 61-residue stretch at 19-79 folds into the HTH cro/C1-type domain; that stretch reads LRQARESLGL…KLVHLPEDEL (61 aa). Positions 30–49 form a DNA-binding region, H-T-H motif; sequence QQTVAERLCLKVSTIRDIEE. A helical; Signal-anchor for type II membrane protein transmembrane segment spans residues 112–132; sequence WLMSFTWLIVLVVLGLTGAWW. At 133-345 the chain is on the periplasmic side; that stretch reads WQNHQAQQAE…RVARLTVCVE (213 aa). The interval 151 to 259 is disordered; that stretch reads SAQLSQNGGQ…PLPTADAGVS (109 aa). The segment covering 188–225 has biased composition (polar residues); it reads PLTNHSGSAITNSATTSSVPKTTSTEPVDTANTNTTMH. Residues 229-241 are compositionally biased toward low complexity; it reads AASAAVSPSQVPQ.

Belongs to the RodZ family.

It localises to the cell inner membrane. Cytoskeletal protein that is involved in cell-shape control through regulation of the length of the long axis. In Yersinia pestis bv. Antiqua (strain Antiqua), this protein is Cytoskeleton protein RodZ.